The primary structure comprises 114 residues: Large ribosomal subunit protein uL22 (114 aa).

The protein belongs to the universal ribosomal protein uL22 family. Part of the 50S ribosomal subunit.

Its function is as follows. This protein binds specifically to 23S rRNA; its binding is stimulated by other ribosomal proteins, e.g. L4, L17, and L20. It is important during the early stages of 50S assembly. It makes multiple contacts with different domains of the 23S rRNA in the assembled 50S subunit and ribosome. The globular domain of the protein is located near the polypeptide exit tunnel on the outside of the subunit, while an extended beta-hairpin is found that lines the wall of the exit tunnel in the center of the 70S ribosome. The chain is Large ribosomal subunit protein uL22 from Streptococcus pyogenes serotype M5 (strain Manfredo).